The following is a 217-amino-acid chain: Ribose-5-phosphate isomerase A (217 aa).

Residues 28 to 31 (TGST), 81 to 84 (DGAD), and 94 to 97 (KGGG) each bind substrate. The active-site Proton acceptor is the Glu-103. Position 121 (Lys-121) interacts with substrate.

Belongs to the ribose 5-phosphate isomerase family. Homodimer.

It catalyses the reaction aldehydo-D-ribose 5-phosphate = D-ribulose 5-phosphate. Its pathway is carbohydrate degradation; pentose phosphate pathway; D-ribose 5-phosphate from D-ribulose 5-phosphate (non-oxidative stage): step 1/1. Functionally, catalyzes the reversible conversion of ribose-5-phosphate to ribulose 5-phosphate. The sequence is that of Ribose-5-phosphate isomerase A from Aeromonas hydrophila subsp. hydrophila (strain ATCC 7966 / DSM 30187 / BCRC 13018 / CCUG 14551 / JCM 1027 / KCTC 2358 / NCIMB 9240 / NCTC 8049).